The sequence spans 285 residues: MASLRDIKKRINATKKTSQITKAMEMVSASKLNRAEMNAKSFVPYMDKMQEVVANIALGAGNATHPMLVTRPVKKTGYLVITSDRGLAGAYNSNVLRTVYQTIQQRHQSPDEYAIIVIGRVGLSFFKKRNFPVILNITGLPDQPSFADIKEIANKAVGLFADGTFDELYMYYNHYVSAIQQEVTERKLLPLTDLVDNKQRTTYEFEPSQEEILDVLLPQYAESLIYGALLDAKASEHAARMTAMKNATDNAHELIRTLTLSYNRARQAAITQEITEIVAGANALQ.

The protein belongs to the ATPase gamma chain family. In terms of assembly, F-type ATPases have 2 components, CF(1) - the catalytic core - and CF(0) - the membrane proton channel. CF(1) has five subunits: alpha(3), beta(3), gamma(1), delta(1), epsilon(1). CF(0) has three main subunits: a, b and c.

It localises to the cell membrane. Produces ATP from ADP in the presence of a proton gradient across the membrane. The gamma chain is believed to be important in regulating ATPase activity and the flow of protons through the CF(0) complex. This Geobacillus sp. (strain WCH70) protein is ATP synthase gamma chain.